A 202-amino-acid chain; its full sequence is MAVPAALILRESPSMKKAVSLINAIDTGRFPRLLTRILQKLHLKAESSFSEEEEEKLQAAFSLEKQDLHLVLETISFILEQAVYHNVKPAALQQQLENIHLRQDKAEAFVNTWSSMGQETVEKFRQRILAPCKLETVGWQLNLQMAHSAQAKLKSPQAVLQLGVNNEDSKSLEKVLVEFSHKELFDFYNKLETIQAQLDSLT.

Ala2 carries the N-acetylalanine modification. In terms of domain architecture, COMM spans 133-202 (KLETVGWQLN…TIQAQLDSLT (70 aa)). Phosphoserine is present on Ser155.

This sequence belongs to the COMM domain-containing protein 10 family. As to quaternary structure, component of the commander complex consisting of the CCC subcomplex and the retriever subcomplex. Component of the CCC (COMMD/CCDC22/CCDC93) subcomplex consisting of COMMD1, COMMD2, COMMD3, COMMD4, COMMD5, COMMD6, COMMD7, COMMD8, COMMD9, COMMD10, CCDC22 and CCDC93; within the complex forms a heterodimer with COMMD5. Interacts with RELA, RELB, NFKB1/p105, NFKB2/p100. Interacts with CCDC22, CCDC93, SCNN1B, CUL1, CUL2, CUL3, CUL4A, CUL4B, CUL7. As to expression, ubiquitous.

It is found in the cytoplasm. The protein resides in the nucleus. Scaffold protein in the commander complex that is essential for endosomal recycling of transmembrane cargos; the commander complex is composed of the CCC subcomplex and the retriever subcomplex. May modulate activity of cullin-RING E3 ubiquitin ligase (CRL) complexes. May down-regulate activation of NF-kappa-B. This chain is COMM domain-containing protein 10 (COMMD10), found in Homo sapiens (Human).